The sequence spans 319 residues: ATP-dependent 6-phosphofructokinase (319 aa).

Gly11 is an ATP binding site. 21–25 (RAAVR) is a binding site for ADP. Residues 72 to 73 (RS) and 102 to 105 (GDGS) contribute to the ATP site. Residue Asp103 coordinates Mg(2+). 125–127 (TID) is a substrate binding site. Asp127 (proton acceptor) is an active-site residue. Position 154 (Arg154) interacts with ADP. Residues Arg162 and 169-171 (MGR) each bind substrate. Residues 185–187 (GAE), Arg211, and 213–215 (KKH) contribute to the ADP site. Residues Glu222, Arg243, and 249-252 (HIQR) contribute to the substrate site.

The protein belongs to the phosphofructokinase type A (PFKA) family. ATP-dependent PFK group I subfamily. Prokaryotic clade 'B1' sub-subfamily. Homotetramer. Requires Mg(2+) as cofactor.

It is found in the cytoplasm. The enzyme catalyses beta-D-fructose 6-phosphate + ATP = beta-D-fructose 1,6-bisphosphate + ADP + H(+). Its pathway is carbohydrate degradation; glycolysis; D-glyceraldehyde 3-phosphate and glycerone phosphate from D-glucose: step 3/4. With respect to regulation, allosterically activated by ADP and other diphosphonucleosides, and allosterically inhibited by phosphoenolpyruvate. Functionally, catalyzes the phosphorylation of D-fructose 6-phosphate to fructose 1,6-bisphosphate by ATP, the first committing step of glycolysis. The chain is ATP-dependent 6-phosphofructokinase from Brevibacillus brevis (strain 47 / JCM 6285 / NBRC 100599).